Reading from the N-terminus, the 206-residue chain is dCTP deaminase, dUMP-forming (206 aa).

DCTP-binding positions include 117–122 (RSSFGR), aspartate 135, 143–145 (TLE), glutamine 163, tyrosine 177, lysine 184, and glutamine 188. The active-site Proton donor/acceptor is glutamate 145.

This sequence belongs to the dCTP deaminase family. In terms of assembly, homotrimer.

It carries out the reaction dCTP + 2 H2O = dUMP + NH4(+) + diphosphate. The protein operates within pyrimidine metabolism; dUMP biosynthesis; dUMP from dCTP: step 1/1. In terms of biological role, bifunctional enzyme that catalyzes both the deamination of dCTP to dUTP and the hydrolysis of dUTP to dUMP without releasing the toxic dUTP intermediate. The protein is dCTP deaminase, dUMP-forming of Methanococcus maripaludis (strain C6 / ATCC BAA-1332).